The chain runs to 531 residues: Outer dynein arm-docking complex subunit 4 (531 aa).

TPR repeat units lie at residues 15-48 (FSTYMAEGEQLYHKAEYKKASDSFTAALQLQPEE), 50-82 (NCLVARSKCFLKLGEPECALKDAEASLQIENDF), and 83-116 (FKGLYQKAEALYAMGDFEFALVHYHRGYKLRPEF). Residues 161–185 (KQKAQVKVQKKDSKQQKKVDPERSQ) are disordered. Residues 169–185 (QKKDSKQQKKVDPERSQ) are compositionally biased toward basic and acidic residues. TPR repeat units follow at residues 275-307 (VKSLEEIDQLLSSGKAEESYKKAQLVLKKVERW), 320-353 (GSLHSCIGNAQMDMGQIEAALQSHKKDLAIAEKY), 360-393 (SRALDNIGRVYARIGKFNEAIKVWEEKIPLANSS), 397-430 (TWLYHEIGRCYLELEQTAEAKEYGEKSQQEADAA), and 437-470 (LNACVLLAQAEVKLKHYQSAISSFENALERARLL). The disordered stretch occupies residues 487–531 (KQGMEEQQESEQNNDENDNLRADGNTARDEEEEDVHVQRTEEDEG). The span at 492–503 (EQQESEQNNDEN) shows a compositional bias: acidic residues. Residues 521–531 (VHVQRTEEDEG) show a composition bias toward basic and acidic residues.

As to quaternary structure, component of the outer dynein arm-docking complex. As to expression, in the mucociliary epithelium, specifically expressed in ciliated cells.

It localises to the cytoplasm. It is found in the cytoskeleton. The protein localises to the cilium axoneme. Component of the outer dynein arm-docking complex (ODA-DC) that mediates outer dynein arms (ODA) binding onto the doublet microtubule. Plays an essential role for the assembly of ODA-DC and in the docking of ODA in ciliary axoneme. Functionally, required for the docking of the outer dynein arm to cilia, hence plays an essential role in cilia motility. This chain is Outer dynein arm-docking complex subunit 4 (odad4), found in Xenopus laevis (African clawed frog).